The chain runs to 506 residues: Glycine--tRNA ligase (506 aa).

Substrate contacts are provided by arginine 99 and glutamate 189. ATP contacts are provided by residues 221-223 (RNE), 231-236 (FRVREF), 305-306 (EL), and 364-367 (GVDR). 236 to 240 (FEQME) serves as a coordination point for substrate. Substrate is bound at residue 360 to 364 (EPSAG).

The protein belongs to the class-II aminoacyl-tRNA synthetase family. Homodimer.

Its subcellular location is the cytoplasm. The enzyme catalyses tRNA(Gly) + glycine + ATP = glycyl-tRNA(Gly) + AMP + diphosphate. Its function is as follows. Catalyzes the attachment of glycine to tRNA(Gly). This Thermus thermophilus (strain ATCC BAA-163 / DSM 7039 / HB27) protein is Glycine--tRNA ligase.